We begin with the raw amino-acid sequence, 183 residues long: Potassium-transporting ATPase KdpC subunit (183 aa).

Residues 11–31 traverse the membrane as a helical segment; it reads LILLLAVVTGALYPLAVTGVA.

Belongs to the KdpC family. As to quaternary structure, the system is composed of three essential subunits: KdpA, KdpB and KdpC.

The protein localises to the cell inner membrane. In terms of biological role, part of the high-affinity ATP-driven potassium transport (or Kdp) system, which catalyzes the hydrolysis of ATP coupled with the electrogenic transport of potassium into the cytoplasm. This subunit acts as a catalytic chaperone that increases the ATP-binding affinity of the ATP-hydrolyzing subunit KdpB by the formation of a transient KdpB/KdpC/ATP ternary complex. This is Potassium-transporting ATPase KdpC subunit from Pseudomonas putida (strain W619).